Here is a 779-residue protein sequence, read N- to C-terminus: Phosphoribosylformylglycinamidine synthase subunit PurL (779 aa).

The active site involves H52. Residues Y55 and K94 each contribute to the ATP site. E96 lines the Mg(2+) pocket. Substrate is bound by residues 97–100 (SHNH) and R119. Residue H98 is the Proton acceptor of the active site. A Mg(2+)-binding site is contributed by D120. Residue Q243 coordinates substrate. D271 lines the Mg(2+) pocket. Residue 315–317 (ESQ) participates in substrate binding. 2 residues coordinate ATP: N523 and G560. N561 contributes to the Mg(2+) binding site. S563 serves as a coordination point for substrate.

The protein belongs to the FGAMS family. Monomer. Part of the FGAM synthase complex composed of 1 PurL, 1 PurQ and 2 PurS subunits.

It localises to the cytoplasm. The enzyme catalyses N(2)-formyl-N(1)-(5-phospho-beta-D-ribosyl)glycinamide + L-glutamine + ATP + H2O = 2-formamido-N(1)-(5-O-phospho-beta-D-ribosyl)acetamidine + L-glutamate + ADP + phosphate + H(+). Its pathway is purine metabolism; IMP biosynthesis via de novo pathway; 5-amino-1-(5-phospho-D-ribosyl)imidazole from N(2)-formyl-N(1)-(5-phospho-D-ribosyl)glycinamide: step 1/2. Part of the phosphoribosylformylglycinamidine synthase complex involved in the purines biosynthetic pathway. Catalyzes the ATP-dependent conversion of formylglycinamide ribonucleotide (FGAR) and glutamine to yield formylglycinamidine ribonucleotide (FGAM) and glutamate. The FGAM synthase complex is composed of three subunits. PurQ produces an ammonia molecule by converting glutamine to glutamate. PurL transfers the ammonia molecule to FGAR to form FGAM in an ATP-dependent manner. PurS interacts with PurQ and PurL and is thought to assist in the transfer of the ammonia molecule from PurQ to PurL. This is Phosphoribosylformylglycinamidine synthase subunit PurL from Prochlorococcus marinus subsp. pastoris (strain CCMP1986 / NIES-2087 / MED4).